A 130-amino-acid chain; its full sequence is Mediator of RNA polymerase II transcription subunit 10 (130 aa).

The protein belongs to the Mediator complex subunit 10 family. Component of the Mediator complex.

It localises to the nucleus. Functionally, component of the Mediator complex, a coactivator involved in the regulated transcription of nearly all RNA polymerase II-dependent genes. Mediator functions as a bridge to convey information from gene-specific regulatory proteins to the basal RNA polymerase II transcription machinery. Mediator is recruited to promoters by direct interactions with regulatory proteins and serves as a scaffold for the assembly of a functional preinitiation complex with RNA polymerase II and the general transcription factors. The polypeptide is Mediator of RNA polymerase II transcription subunit 10 (MED10) (Anopheles gambiae (African malaria mosquito)).